Consider the following 287-residue polypeptide: Bifunctional protein FolD (287 aa).

Residues 166 to 168 and Ile-232 contribute to the NADP(+) site; that span reads GAS.

It belongs to the tetrahydrofolate dehydrogenase/cyclohydrolase family. In terms of assembly, homodimer.

The enzyme catalyses (6R)-5,10-methylene-5,6,7,8-tetrahydrofolate + NADP(+) = (6R)-5,10-methenyltetrahydrofolate + NADPH. The catalysed reaction is (6R)-5,10-methenyltetrahydrofolate + H2O = (6R)-10-formyltetrahydrofolate + H(+). It participates in one-carbon metabolism; tetrahydrofolate interconversion. In terms of biological role, catalyzes the oxidation of 5,10-methylenetetrahydrofolate to 5,10-methenyltetrahydrofolate and then the hydrolysis of 5,10-methenyltetrahydrofolate to 10-formyltetrahydrofolate. In Buchnera aphidicola subsp. Baizongia pistaciae (strain Bp), this protein is Bifunctional protein FolD.